The chain runs to 80 residues: Exodeoxyribonuclease 7 small subunit (80 aa).

The protein belongs to the XseB family. Heterooligomer composed of large and small subunits.

Its subcellular location is the cytoplasm. The catalysed reaction is Exonucleolytic cleavage in either 5'- to 3'- or 3'- to 5'-direction to yield nucleoside 5'-phosphates.. Bidirectionally degrades single-stranded DNA into large acid-insoluble oligonucleotides, which are then degraded further into small acid-soluble oligonucleotides. In Aliivibrio fischeri (strain ATCC 700601 / ES114) (Vibrio fischeri), this protein is Exodeoxyribonuclease 7 small subunit.